Consider the following 418-residue polypeptide: Cell division protein FtsA (418 aa).

The protein belongs to the FtsA/MreB family. In terms of assembly, self-interacts. Interacts with FtsZ.

Its subcellular location is the cell inner membrane. Cell division protein that is involved in the assembly of the Z ring. May serve as a membrane anchor for the Z ring. This is Cell division protein FtsA from Buchnera aphidicola subsp. Schizaphis graminum (strain Sg).